The following is a 447-amino-acid chain: Argininosuccinate synthase (447 aa).

ATP contacts are provided by residues 17–25 and A43; that span reads AFSGGLDTS. Position 99 (Y99) interacts with L-citrulline. 2 residues coordinate ATP: G129 and T131. L-aspartate-binding residues include T131, N135, and D136. L-citrulline is bound at residue N135. D136 is a binding site for ATP. R139 and S192 together coordinate L-citrulline. D194 contributes to the ATP binding site. T201, E203, and E280 together coordinate L-citrulline.

The protein belongs to the argininosuccinate synthase family. Type 2 subfamily. Homotetramer.

Its subcellular location is the cytoplasm. It carries out the reaction L-citrulline + L-aspartate + ATP = 2-(N(omega)-L-arginino)succinate + AMP + diphosphate + H(+). It functions in the pathway amino-acid biosynthesis; L-arginine biosynthesis; L-arginine from L-ornithine and carbamoyl phosphate: step 2/3. The polypeptide is Argininosuccinate synthase (argG) (Escherichia coli O157:H7).